Consider the following 397-residue polypeptide: Chorismate synthase (397 aa).

NADP(+) is bound by residues arginine 40 and arginine 46. Residues 129 to 131, 257 to 258, glycine 302, 317 to 321, and arginine 343 contribute to the FMN site; these read RSS, QA, and KPISS.

The protein belongs to the chorismate synthase family. As to quaternary structure, homotetramer. Requires FMNH2 as cofactor.

The enzyme catalyses 5-O-(1-carboxyvinyl)-3-phosphoshikimate = chorismate + phosphate. It functions in the pathway metabolic intermediate biosynthesis; chorismate biosynthesis; chorismate from D-erythrose 4-phosphate and phosphoenolpyruvate: step 7/7. In terms of biological role, catalyzes the anti-1,4-elimination of the C-3 phosphate and the C-6 proR hydrogen from 5-enolpyruvylshikimate-3-phosphate (EPSP) to yield chorismate, which is the branch point compound that serves as the starting substrate for the three terminal pathways of aromatic amino acid biosynthesis. This reaction introduces a second double bond into the aromatic ring system. This chain is Chorismate synthase, found in Chlorobium limicola (strain DSM 245 / NBRC 103803 / 6330).